The following is a 369-amino-acid chain: Anhydro-N-acetylmuramic acid kinase (369 aa).

An ATP-binding site is contributed by 12–19 (GTSLDGVD).

The protein belongs to the anhydro-N-acetylmuramic acid kinase family.

It catalyses the reaction 1,6-anhydro-N-acetyl-beta-muramate + ATP + H2O = N-acetyl-D-muramate 6-phosphate + ADP + H(+). It functions in the pathway amino-sugar metabolism; 1,6-anhydro-N-acetylmuramate degradation. It participates in cell wall biogenesis; peptidoglycan recycling. Its function is as follows. Catalyzes the specific phosphorylation of 1,6-anhydro-N-acetylmuramic acid (anhMurNAc) with the simultaneous cleavage of the 1,6-anhydro ring, generating MurNAc-6-P. Is required for the utilization of anhMurNAc either imported from the medium or derived from its own cell wall murein, and thus plays a role in cell wall recycling. This Escherichia coli O45:K1 (strain S88 / ExPEC) protein is Anhydro-N-acetylmuramic acid kinase.